Reading from the N-terminus, the 518-residue chain is AarF domain-containing kinase 1 (518 aa).

The Protein kinase domain occupies 149-468; that stretch reads SFEREPLGTA…SKCCVQSSYA (320 aa). ATP contacts are provided by residues 155-163 and Lys-177; that span reads LGTASLAQV. The active-site Proton acceptor is Asp-309.

Belongs to the protein kinase superfamily. ADCK protein kinase family.

It is found in the mitochondrion. Essential for maintaining mitochondrial cristae formation and mitochondrial function by acting via YME1L to regulate the mitochondrial structural proteins Opa1 and Mitofilin. This function is likely to be kinase-independent. Functions in tracheal development and larval molting probably by acting in sterol modification and/or intracellular lipid trafficking. The action of this enzyme is not yet clear. It is not known if it has protein kinase activity and what type of substrate it would phosphorylate (Ser, Thr or Tyr). The protein is AarF domain-containing kinase 1 of Drosophila melanogaster (Fruit fly).